A 356-amino-acid chain; its full sequence is C-C chemokine receptor 1-like protein 1 (356 aa).

Topologically, residues 1 to 32 are extracellular; it reads MEIPAVTEPSYNTVAKNDFMSGFLCFSINVRA. Residues 33-60 traverse the membrane as a helical segment; sequence FGITVLTPLYSLVFIIGVIGHVLVVLVL. Over 61-67 the chain is Cytoplasmic; the sequence is IQHKRLR. Residues 68-92 traverse the membrane as a helical segment; the sequence is NMTSIYLFNLAISDLVFLSTLPFWV. Residues 93–108 lie on the Extracellular side of the membrane; sequence DYIMKGDWIFGNAMCK. Cysteines 107 and 184 form a disulfide. Residues 109–130 form a helical membrane-spanning segment; it reads FVSGFYYLGLYSDMFFITLLTI. At 131 to 147 the chain is on the cytoplasmic side; the sequence is DRYLAVVHVVFALRART. Residues 148 to 172 traverse the membrane as a helical segment; sequence VTFGIISSIITWVLAALVSIPCLYV. Residues 173–198 lie on the Extracellular side of the membrane; that stretch reads FKSQMEFTYHTCRAILPRKSLIRFLR. The chain crosses the membrane as a helical span at residues 199-224; sequence FQALTMNILGLILPLLAMIICYTRII. Residues 225–240 are Cytoplasmic-facing; that stretch reads NVLHRRPNKKKAKVMR. The chain crosses the membrane as a helical span at residues 241 to 265; it reads LIFVITLLFFLLLAPYYLAAFVSAF. The Extracellular segment spans residues 266 to 282; the sequence is EDVLFTPSCLRSQQVDL. A helical membrane pass occupies residues 283–306; that stretch reads SLMITEALAYTHCCVNPVIYVFVG. Residues 307 to 356 are Cytoplasmic-facing; it reads KRFRKYLWQLFRRHTAITLPQWLPFLSVDRAQRASATPPSTVEIETSADL.

The protein belongs to the G-protein coupled receptor 1 family. In terms of tissue distribution, detected in the spleen, liver and leukocytes.

It localises to the cell membrane. Probable receptor for a C-C type chemokine. The polypeptide is C-C chemokine receptor 1-like protein 1 (Ccr1l1) (Mus musculus (Mouse)).